Here is a 67-residue protein sequence, read N- to C-terminus: Small ribosomal subunit protein bS21 (67 aa).

The protein belongs to the bacterial ribosomal protein bS21 family.

This is Small ribosomal subunit protein bS21 from Paramagnetospirillum magneticum (strain ATCC 700264 / AMB-1) (Magnetospirillum magneticum).